Reading from the N-terminus, the 48-residue chain is uncharacterized protein (48 aa).

The disordered stretch occupies residues 1–48 (MSRRMGGGMPKINLSGAIPNNNTSTPSTPTLRSSVSVSSSNSRGLFLA). Over residues 20–48 (NNNTSTPSTPTLRSSVSVSSSNSRGLFLA) the composition is skewed to low complexity.

This is an uncharacterized protein from Dictyostelium discoideum (Social amoeba).